Reading from the N-terminus, the 173-residue chain is 3-hydroxydecanoyl-[acyl-carrier-protein] dehydratase (173 aa).

H71 is an active-site residue.

The protein belongs to the thioester dehydratase family. FabA subfamily. In terms of assembly, homodimer.

Its subcellular location is the cytoplasm. It carries out the reaction a (3R)-hydroxyacyl-[ACP] = a (2E)-enoyl-[ACP] + H2O. The enzyme catalyses (3R)-hydroxydecanoyl-[ACP] = (2E)-decenoyl-[ACP] + H2O. It catalyses the reaction (2E)-decenoyl-[ACP] = (3Z)-decenoyl-[ACP]. It participates in lipid metabolism; fatty acid biosynthesis. Its function is as follows. Necessary for the introduction of cis unsaturation into fatty acids. Catalyzes the dehydration of (3R)-3-hydroxydecanoyl-ACP to E-(2)-decenoyl-ACP and then its isomerization to Z-(3)-decenoyl-ACP. Can catalyze the dehydratase reaction for beta-hydroxyacyl-ACPs with saturated chain lengths up to 16:0, being most active on intermediate chain length. This Baumannia cicadellinicola subsp. Homalodisca coagulata protein is 3-hydroxydecanoyl-[acyl-carrier-protein] dehydratase.